The primary structure comprises 205 residues: Putative 3-methyladenine DNA glycosylase (205 aa).

This sequence belongs to the DNA glycosylase MPG family.

This is Putative 3-methyladenine DNA glycosylase from Bacillus cereus (strain ATCC 14579 / DSM 31 / CCUG 7414 / JCM 2152 / NBRC 15305 / NCIMB 9373 / NCTC 2599 / NRRL B-3711).